Consider the following 2079-residue polypeptide: Protein xmas (2079 aa).

An RRM domain is found at 12–83 (KTLLCRNIPE…HLFDISYADN (72 aa)). Residues 112-152 (NEYGSGKPIKKPQNGSSGSGGSSMLPAIPVGPATAPVSRDR) form a disordered region. The PCI domain occupies 342–525 (DSKINAENLT…ETEYKLPRQY (184 aa)). The interval 835–1359 (PLSFGAENPE…RRDASDHKHA (525 aa)) is sufficient for Orc3 binding. Disordered stretches follow at residues 1335-1360 (RHTL…KHAM), 1755-1778 (AEET…SKRA), 1930-1963 (KAQA…TSKA), and 2032-2079 (SAAA…TGKL). Residues 1764–1776 (HHRHHGGGQKMSK) show a composition bias toward basic residues. The segment covering 2048-2059 (PVVSPKVQVPSV) has biased composition (low complexity). The span at 2070–2079 (GPQTTKTGKL) shows a compositional bias: polar residues.

It belongs to the SAC3 family. As to quaternary structure, component of the nuclear pore complex (NPC)-associated TREX-2/AMEX complex (anchoring and mRNA export complex), composed of e(y)2, xmas and PCID2. Within the TREX-2/ AMEX complex, interactions with e(y)2 is required for localization of e(y)2 to the nuclear periphery. Interaction between the TREX-2/AMEX complex and the ORC complex is required for ORC localization to mRNPs, and consequently mRNA export. Within the TREX-2/AMEX-ORC complex, interacts with Orc6, (via C-terminus) with Orc3, and weakly interacts with Orc4. However, another report found that the interaction with Orc3 is not direct, instead it is mediated via e(y)2. Interacts with piwi. In terms of tissue distribution, expressed in ovaries (at protein level). Detected in the testes and ovaries, with expression levels higher in oocytes than in testicular cells (at protein level). As to expression, detected in the testes and ovaries (at protein level). In terms of tissue distribution, detected in the testes.

It is found in the nucleus. The protein resides in the nucleoplasm. The protein localises to the nucleus membrane. It localises to the cytoplasm. Functionally, involved in mRNA export and mRNA coupled transcription activation. Component of the nuclear pore complex (NPC)-associated TREX-2/AMEX complex (anchoring and mRNA export complex) which functions in docking export-competent ribonucleoprotein particles (mRNPs) to the nuclear entrance of the nuclear pore complex (nuclear basket), thereby enabling the export of mRNAs to the cytoplasm through the nuclear pores. The TREX-2/AMEX complex also functions with the transcriptional coactivator SAGA/TFTC complex, to anchor a subset of transcription sites to the nuclear pore complex basket in order to achieve efficient transcription and export of their resulting mRNAs. Within the complex, required for localization of e(y)2 to the nuclear periphery. This Drosophila melanogaster (Fruit fly) protein is Protein xmas.